A 121-amino-acid chain; its full sequence is Large ribosomal subunit protein bL20 (121 aa).

The protein belongs to the bacterial ribosomal protein bL20 family.

Its function is as follows. Binds directly to 23S ribosomal RNA and is necessary for the in vitro assembly process of the 50S ribosomal subunit. It is not involved in the protein synthesizing functions of that subunit. The protein is Large ribosomal subunit protein bL20 of Moorella thermoacetica (strain ATCC 39073 / JCM 9320).